The following is a 1132-amino-acid chain: MPRAPRCRAVRSLLRSHYREVLPLATFVRRLGPQGWRLVQRGDPAAFRALVAQCLVCVPWDARPPPAAPSFRQVSCLKELVARVLQRLCERGAKNVLAFGFALLDGARGGPPEAFTTSVRSYLPNTVTDALRGSGAWGLLLRRVGDDVLVHLLARCALFVLVAPSCAYQVCGPPLYQLGAATQARPPPHASGPRRRLGCERAWNHSVREAGVPLGLPAPGARRRGGSASRSLPLPKRPRRGAAPEPERTPVGQGSWAHPGRTRGPSDRGFCVVSPARPAEEATSLEGALSGTRHSHPSVGRQHHAGPPSTSRPPRPWDTPCPPVYAETKHFLYSSGDKEQLRPSFLLSSLRPSLTGARRLVETIFLGSRPWMPGTPRRLPRLPQRYWQMRPLFLELLGNHAQCPYGVLLKTHCPLRAAVTPAAGVCAREKPQGSVAAPEEEDTDPRRLVQLLRQHSSPWQVYGFVRACLRRLVPPGLWGSRHNERRFLRNTKKFISLGKHAKLSLQELTWKMSVRDCAWLRRSPGVGCVPAAEHRLREEILAKFLHWLMSVYVVELLRSFFYVTETTFQKNRLFFYRKSVWSKLQSIGIRQHLKRVQLRELSEAEVRQHREARPALLTSRLRFIPKPDGLRPIVNMDYVVGARTFRREKRAERLTSRVKALFSVLNYERARRPGLLGASVLGLDDIHRAWRTFVLRVRAQDPPPELYFVKVDVTGAYDTIPQDRLTEVIASIIKPQNTYCVRRYAVVQKAAHGHVRKAFKSHVSTLTDLQPYMRQFVAHLQETSPLRDAVVIEQSSSLNEASSGLFDVFLRFMCHHAVRIRGKSYVQCQGIPQGSILSTLLCSLCYGDMENKLFAGIRRDGLLLRLVDDFLLVTPHLTHAKTFLRTLVRGVPEYGCVVNLRKTVVNFPVEDEALGGTAFVQMPAHGLFPWCGLLLDTRTLEVQSDYSSYARTSIRASLTFNRGFKAGRNMRRKLFGVLRLKCHSLFLDLQVNSLQTVCTNIYKILLLQAYRFHACVLQLPFHQQVWKNPTFFLRVISDTASLCYSILKAKNAGMSLGAKGAAGPLPSEAVQWLCHQAFLLKLTRHRVTYVPLLGSLRTAQTQLSRKLPGTTLTALEAAANPALPSDFKTILD.

The segment at 1–230 (MPRAPRCRAV…ARRRGGSASR (230 aa)) is RNA-interacting domain 1. The tract at residues 58-197 (VPWDARPPPA…PHASGPRRRL (140 aa)) is GQ motif. Positions 137-141 (WGLLL) are required for regulating specificity for telomeric DNA and for processivity for primer elongation. The interval 210-320 (AGVPLGLPAP…SRPPRPWDTP (111 aa)) is disordered. A compositionally biased stretch (low complexity) spans 213 to 234 (PLGLPAPGARRRGGSASRSLPL). Positions 222-240 (RRRGGSASRSLPLPKRPRR) match the Bipartite nuclear localization signal motif. At S227 the chain carries Phosphoserine; by PKB/AKT1. Residues 231–324 (SLPLPKRPRR…RPWDTPCPPV (94 aa)) are linker. Residues 293–304 (RHSHPSVGRQHH) are compositionally biased toward basic residues. Residues 301 to 538 (RQHHAGPPST…VPAAEHRLRE (238 aa)) are required for oligomerization. The span at 310–320 (TSRPPRPWDTP) shows a compositional bias: pro residues. The tract at residues 325 to 550 (YAETKHFLYS…LAKFLHWLMS (226 aa)) is RNA-interacting domain 2. The short motif at 328–333 (TKHFLY) is the TFLY; involved in RNA binding element. The interval 376 to 521 (PRRLPRLPQR…MSVRDCAWLR (146 aa)) is QFP motif. The CP motif stretch occupies residues 397–417 (LGNHAQCPYGVLLKTHCPLRA). A Phosphoserine; by DYRK2 modification is found at S457. A Reverse transcriptase domain is found at 605–935 (EVRQHREARP…GLFPWCGLLL (331 aa)). Position 707 is a phosphotyrosine; by SRC-type Tyr-kinases (Y707). Residues D712, D868, and D869 each coordinate Mg(2+). Residues 914–928 (LGGTAFVQMPAHGLF) form a required for oligomerization region. Residues 930–934 (WCGLL) are primer grip sequence. Residues 936-1132 (DTRTLEVQSD…LPSDFKTILD (197 aa)) are CTE.

Belongs to the reverse transcriptase family. Telomerase subfamily. As to quaternary structure, catalytic component of the telomerase holoenzyme complex composed of one molecule of TERT, one molecule of WRAP53/TCAB1, two molecules of H/ACA ribonucleoprotein complex subunits DKC1, NOP10, NHP2 and GAR1, and a telomerase RNA template component (TERC). The telomerase holoenzyme complex is associated with TEP1, SMG6/EST1A and POT1. The molecular chaperone HSP90/P23 complex is required for correct assembly and stabilization of the active telomerase. Interacts directly with HSP90A and PTGES3. Interacts with HSPA1A; the interaction occurs in the absence of TERC and dissociates once the complex has formed. Interacts with RAN; the interaction promotes nuclear export of TERT. Interacts with XPO1. Interacts with PTPN11; the interaction retains TERT in the nucleus. Interacts with NCL (via RRM1 and C-terminal RRM4/Arg/Gly-rich domains); the interaction is important for nucleolar localization of TERT. Interacts with SMARCA4 (via the bromodomain); the interaction regulates Wnt-mediated signaling. Interacts with MCRS1 (isoform MCRS2); the interaction inhibits in vitro telomerase activity. Interacts with PIF1; the interaction has no effect on the elongation activity of TERT. Interacts with PML; the interaction recruits TERT to PML bodies and inhibits telomerase activity. Interacts with GNL3L. Interacts with isoform 1 and isoform 2 of NVL. Interacts with DHX36. Interacts with ATF7. In terms of processing, phosphorylation at Tyr-707 under oxidative stress leads to translocation of TERT to the cytoplasm and reduces its antiapoptotic activity. Dephosphorylated by SHP2/PTPN11 leading to nuclear retention. Phosphorylation at Ser-227 by the AKT pathway promotes nuclear location. Phosphorylation at the G2/M phase at Ser-457 by DYRK2 promotes ubiquitination by the EDVP complex and degradation. Post-translationally, ubiquitinated by the EDVP complex, a E3 ligase complex following phosphorylation at Ser-457 by DYRK2. Ubiquitinated leads to proteasomal degradation. (Microbial infection) In case of infection by HIV-1, the EDVP complex is hijacked by HIV-1 via interaction between HIV-1 Vpr and DCAF1/VPRBP, leading to ubiquitination and degradation. As to expression, expressed at a high level in thymocyte subpopulations, at an intermediate level in tonsil T-lymphocytes, and at a low to undetectable level in peripheral blood T-lymphocytes.

The protein resides in the nucleus. The protein localises to the nucleolus. Its subcellular location is the nucleoplasm. It is found in the chromosome. It localises to the telomere. The protein resides in the cytoplasm. The protein localises to the PML body. It catalyses the reaction DNA(n) + a 2'-deoxyribonucleoside 5'-triphosphate = DNA(n+1) + diphosphate. Its function is as follows. Telomerase is a ribonucleoprotein enzyme essential for the replication of chromosome termini in most eukaryotes. Active in progenitor and cancer cells. Inactive, or very low activity, in normal somatic cells. Catalytic component of the teleromerase holoenzyme complex whose main activity is the elongation of telomeres by acting as a reverse transcriptase that adds simple sequence repeats to chromosome ends by copying a template sequence within the RNA component of the enzyme. Catalyzes the RNA-dependent extension of 3'-chromosomal termini with the 6-nucleotide telomeric repeat unit, 5'-TTAGGG-3'. The catalytic cycle involves primer binding, primer extension and release of product once the template boundary has been reached or nascent product translocation followed by further extension. More active on substrates containing 2 or 3 telomeric repeats. Telomerase activity is regulated by a number of factors including telomerase complex-associated proteins, chaperones and polypeptide modifiers. Modulates Wnt signaling. Plays important roles in aging and antiapoptosis. In Homo sapiens (Human), this protein is Telomerase reverse transcriptase (TERT).